The sequence spans 943 residues: Isoleucine--tRNA ligase (943 aa).

The short motif at 58-68 (PYANGKIHIGH) is the 'HIGH' region element. Glu567 serves as a coordination point for L-isoleucyl-5'-AMP. A 'KMSKS' region motif is present at residues 608–612 (KMSKS). Position 611 (Lys611) interacts with ATP. Zn(2+) contacts are provided by Cys906, Cys909, Cys926, and Cys929.

The protein belongs to the class-I aminoacyl-tRNA synthetase family. IleS type 1 subfamily. In terms of assembly, monomer. It depends on Zn(2+) as a cofactor.

The protein localises to the cytoplasm. The catalysed reaction is tRNA(Ile) + L-isoleucine + ATP = L-isoleucyl-tRNA(Ile) + AMP + diphosphate. Functionally, catalyzes the attachment of isoleucine to tRNA(Ile). As IleRS can inadvertently accommodate and process structurally similar amino acids such as valine, to avoid such errors it has two additional distinct tRNA(Ile)-dependent editing activities. One activity is designated as 'pretransfer' editing and involves the hydrolysis of activated Val-AMP. The other activity is designated 'posttransfer' editing and involves deacylation of mischarged Val-tRNA(Ile). This chain is Isoleucine--tRNA ligase, found in Pseudomonas entomophila (strain L48).